The chain runs to 232 residues: tRNA-uridine aminocarboxypropyltransferase (232 aa).

Zn(2+)-binding residues include Cys31, Cys34, Cys41, and Cys43. The DXTW signature appears at Asp137–Trp140.

Belongs to the TDD superfamily. DTWD2 family. TapT subfamily. In terms of assembly, monomer in solution.

The catalysed reaction is a uridine in tRNA + S-adenosyl-L-methionine = a 3-[(3S)-3-amino-3-carboxypropyl]uridine in tRNA + S-methyl-5'-thioadenosine + H(+). It carries out the reaction uridine(47) in tRNA(Phe) + S-adenosyl-L-methionine = 3-[(3S)-3-amino-3-carboxypropyl]uridine(47) in tRNA(Phe) + S-methyl-5'-thioadenosine + H(+). Its activity is regulated as follows. The degree of the acp3U modification at U47 is dependent on the presence of the m7G modification at the preceding nucleotide G46. It also depends on medium conditions. In terms of biological role, catalyzes the formation of 3-(3-amino-3-carboxypropyl)uridine (acp3U) at position 47 of tRNAs. Acp3U47 confers thermal stability on tRNA. The polypeptide is tRNA-uridine aminocarboxypropyltransferase (Escherichia coli (strain K12)).